The primary structure comprises 181 residues: Nucleoside diphosphate kinase, mitochondrial (181 aa).

Residues 1–10 are compositionally biased toward basic residues; the sequence is MFRGGTHRLR. The interval 1-22 is disordered; it reads MFRGGTHRLRGQPGLSLPHGPR. A mitochondrion-targeting transit peptide spans 1-24; that stretch reads MFRGGTHRLRGQPGLSLPHGPRCY. Positions 40, 88, 116, 122, 133, and 143 each coordinate ATP. The Pros-phosphohistidine intermediate role is filled by histidine 146.

This sequence belongs to the NDK family. Mg(2+) serves as cofactor. In terms of tissue distribution, highest levels in the liver and kidney with lower levels in the heart, brain and breast muscle.

It is found in the mitochondrion intermembrane space. The protein resides in the mitochondrion matrix. It carries out the reaction a 2'-deoxyribonucleoside 5'-diphosphate + ATP = a 2'-deoxyribonucleoside 5'-triphosphate + ADP. It catalyses the reaction a ribonucleoside 5'-diphosphate + ATP = a ribonucleoside 5'-triphosphate + ADP. Its activity is regulated as follows. Feedback inhibition by ADP. Major role in the synthesis of nucleoside triphosphates other than ATP. The ATP gamma phosphate is transferred to the NDP beta phosphate via a ping-pong mechanism, using a phosphorylated active-site intermediate. Through the catalyzed exchange of gamma-phosphate between di- and triphosphonucleosides participates in regulation of intracellular nucleotide homeostasis. Binds to anionic phospholipids, predominantly to cardiolipin; the binding inhibits its phosphotransfer activity. Acts as a mitochondria-specific NDK coupled to respiration. Promotes the redistribution of cardiolipin between the mitochondrial inner membrane and outer membrane which is implicated in pro-apoptotic signaling. The sequence is that of Nucleoside diphosphate kinase, mitochondrial (NME4) from Columba livia (Rock dove).